Reading from the N-terminus, the 88-residue chain is uncharacterized protein (88 aa).

A run of 2 helical transmembrane segments spans residues Phe13–Pro33 and Trp62–Ile82.

The protein resides in the cell membrane. This is an uncharacterized protein from Bacillus subtilis (strain 168).